Consider the following 320-residue polypeptide: GTPase Era (320 aa).

Residues 25 to 193 (HCGFIAIVGR…RKHVRNHLPK (169 aa)) form the Era-type G domain. A G1 region spans residues 33–40 (GRPNVGKS). 33-40 (GRPNVGKS) serves as a coordination point for GTP. A G2 region spans residues 59 to 63 (QTTRH). The tract at residues 80 to 83 (DTPG) is G3. Residues 80 to 84 (DTPGL) and 142 to 145 (NKVD) contribute to the GTP site. The tract at residues 142–145 (NKVD) is G4. Residues 172–174 (ISA) are G5. One can recognise a KH type-2 domain in the interval 216–302 (VREKLMRFTG…YLETWVKVKS (87 aa)).

Belongs to the TRAFAC class TrmE-Era-EngA-EngB-Septin-like GTPase superfamily. Era GTPase family. In terms of assembly, monomer.

The protein resides in the cytoplasm. It is found in the cell inner membrane. In terms of biological role, an essential GTPase that binds both GDP and GTP, with rapid nucleotide exchange. Plays a role in 16S rRNA processing and 30S ribosomal subunit biogenesis and possibly also in cell cycle regulation and energy metabolism. This chain is GTPase Era, found in Vibrio parahaemolyticus serotype O3:K6 (strain RIMD 2210633).